The sequence spans 460 residues: Interleukin-6 receptor subunit alpha (460 aa).

The signal sequence occupies residues 1–19; sequence MLTVGCTLLVALLAAPAVA. The 97-residue stretch at 20–116 folds into the Ig-like C2-type domain; it reads LVLGSCRALE…DVPPEEPKLS (97 aa). The Extracellular portion of the chain corresponds to 20 to 364; that stretch reads LVLGSCRALE…VQESSSMSLP (345 aa). 4 disulfides stabilise this stretch: C25–C190, C47–C92, C117–C128, and C162–C173. Residues N32 and N55 are each glycosylated (N-linked (GlcNAc...) asparagine). 2 Fibronectin type-III domains span residues 109–214 and 215–313; these read PPEE…VQPD and PPAN…TPWI. N-linked (GlcNAc...) asparagine glycosylation is present at N150. N-linked (GlcNAc...) asparagine glycosylation is present at N218. The short motif at 300-304 is the WSXWS motif element; it reads WSEWS. A helical transmembrane segment spans residues 365 to 385; it reads TFLVAGGSLAFGLLLCVFIIL. Topologically, residues 386–460 are cytoplasmic; sequence RLKQKWKSEA…NSNRDYLFPR (75 aa).

The protein belongs to the type I cytokine receptor family. Type 3 subfamily. As to quaternary structure, component of a hexamer of two molecules each of IL6, IL6R and IL6ST; first binds to IL6 to associate with the signaling subunit IL6ST. Interacts (via N-terminal ectodomain) with SORL1; this interaction may affect IL6-binding to IL6R, hence decrease IL6 'classic-signaling'. In terms of assembly, also interacts with SORL1; this interaction leads to soluble IL6R internalization. May form a trimeric complex with the soluble SORL1 ectodomain and circulating IL6 receptor; this interaction might stabilize circulating IL6, hence promote IL6 'trans-signaling'. In terms of processing, a short soluble form is also released from the membrane by proteolysis. The sIL6R is formed by limited proteolysis of membrane-bound receptors, a process referred to as ectodomain shedding. mIL6R is cleaved by the proteases ADAM10 and ADAM17. Glycosylated. Glycosylation is dispensable for transport, signaling, and cell-surface turnover. Glycosylation at Asn-55 is a protease-regulatory exosite. Glycosylation is required for ADAM17-mediated proteolysis. Expressed by dendritic cells. In terms of tissue distribution, detected in the cerebrospinal fluid.

The protein localises to the cell membrane. It localises to the secreted. With respect to regulation, classic and trans-signaling are both inhibited by tocilizumab, a humanized monoclonal antibody that blocks interleukin IL6R signaling. Functionally, part of the receptor for interleukin 6. Binds to IL6 with low affinity, but does not transduce a signal. Signal activation necessitate an association with IL6ST. Activation leads to the regulation of the immune response, acute-phase reactions and hematopoiesis. The interaction with membrane-bound IL6R and IL6ST stimulates 'classic signaling', the restricted expression of the IL6R limits classic IL6 signaling to only a few tissues such as the liver and some cells of the immune system. Whereas the binding of IL6 and soluble IL6R to IL6ST stimulates 'trans-signaling'. Alternatively, 'cluster signaling' occurs when membrane-bound IL6:IL6R complexes on transmitter cells activate IL6ST receptors on neighboring receiver cells. Signaling via the membrane-bound IL6R is mostly regenerative and anti-inflammatory. Drives naive CD4(+) T cells to the Th17 lineage, through 'cluster signaling' by dendritic cells. In terms of biological role, soluble form of IL6 receptor (sIL6R) that acts as an agonist of IL6 activity. The IL6:sIL6R complex (hyper-IL6) binds to IL6ST/gp130 on cell surfaces and induces signaling also on cells that do not express membrane-bound IL6R in a process called IL6 'trans-signaling'. sIL6R is causative for the pro-inflammatory properties of IL6 and an important player in the development of chronic inflammatory diseases. In complex with IL6, is required for induction of VEGF production. Plays a protective role during liver injury, being required for maintenance of tissue regeneration. 'Trans-signaling' in central nervous system regulates energy and glucose homeostasis. The chain is Interleukin-6 receptor subunit alpha from Mus musculus (Mouse).